Consider the following 355-residue polypeptide: Elongation factor Ts (355 aa).

The interval 82-85 (TDFV) is involved in Mg(2+) ion dislocation from EF-Tu.

Belongs to the EF-Ts family.

The protein resides in the cytoplasm. Functionally, associates with the EF-Tu.GDP complex and induces the exchange of GDP to GTP. It remains bound to the aminoacyl-tRNA.EF-Tu.GTP complex up to the GTP hydrolysis stage on the ribosome. This is Elongation factor Ts (tsf) from Helicobacter pylori (strain ATCC 700392 / 26695) (Campylobacter pylori).